A 551-amino-acid chain; its full sequence is Sodium-dependent high-affinity dicarboxylate transporter 2 (551 aa).

Helical transmembrane passes span 9–29, 34–54, 82–102, 119–139, 194–214, 243–263, 347–367, 417–437, 449–469, and 497–517; these read LIKK…LFFG, CLFS…PIGV, SIVL…TGLH, VMLL…SDTA, FCKA…TAII, WMVF…IILV, VSGV…FDPI, IFVG…IVIM, IFIP…LYLA, and VISM…CILI.

Belongs to the SLC13A/DASS transporter (TC 2.A.47) family. NADC subfamily.

It is found in the membrane. Functionally, high-affinity sodium-dicarboxylate cotransporter that accepts a range of tricarboxylic acid-cycle intermediates with 4-5 carbon atoms. There is no interaction with monocarboxylates. This Caenorhabditis elegans protein is Sodium-dependent high-affinity dicarboxylate transporter 2 (nac-2).